The sequence spans 137 residues: Nucleoside diphosphate kinase (137 aa).

The ATP site is built by K9, F57, R85, T91, R102, and N112. The active-site Pros-phosphohistidine intermediate is H115.

This sequence belongs to the NDK family. As to quaternary structure, homotetramer. The cofactor is Mg(2+).

The protein localises to the cytoplasm. It carries out the reaction a 2'-deoxyribonucleoside 5'-diphosphate + ATP = a 2'-deoxyribonucleoside 5'-triphosphate + ADP. The enzyme catalyses a ribonucleoside 5'-diphosphate + ATP = a ribonucleoside 5'-triphosphate + ADP. In terms of biological role, major role in the synthesis of nucleoside triphosphates other than ATP. The ATP gamma phosphate is transferred to the NDP beta phosphate via a ping-pong mechanism, using a phosphorylated active-site intermediate. In Campylobacter concisus (strain 13826), this protein is Nucleoside diphosphate kinase.